Here is a 427-residue protein sequence, read N- to C-terminus: Adenylosuccinate synthetase (427 aa).

GTP-binding positions include 12–18 and 40–42; these read GDEGKGK and GHT. Asp13 (proton acceptor) is an active-site residue. Positions 13 and 40 each coordinate Mg(2+). Residues 13 to 16, 38 to 41, Thr128, Arg142, Gln223, Thr238, and Arg302 contribute to the IMP site; these read DEGK and NAGH. His41 acts as the Proton donor in catalysis. Substrate is bound at residue 298-304; it reads TTTGRPR. GTP-binding positions include Arg304, 330–332, and 412–414; these read KLD and SVG.

Belongs to the adenylosuccinate synthetase family. Homodimer. It depends on Mg(2+) as a cofactor.

The protein localises to the cytoplasm. It catalyses the reaction IMP + L-aspartate + GTP = N(6)-(1,2-dicarboxyethyl)-AMP + GDP + phosphate + 2 H(+). It participates in purine metabolism; AMP biosynthesis via de novo pathway; AMP from IMP: step 1/2. Its function is as follows. Plays an important role in the de novo pathway of purine nucleotide biosynthesis. Catalyzes the first committed step in the biosynthesis of AMP from IMP. This Carboxydothermus hydrogenoformans (strain ATCC BAA-161 / DSM 6008 / Z-2901) protein is Adenylosuccinate synthetase.